The primary structure comprises 297 residues: Aspartate carbamoyltransferase catalytic subunit (297 aa).

Carbamoyl phosphate contacts are provided by arginine 51 and threonine 52. Lysine 79 contacts L-aspartate. Carbamoyl phosphate-binding residues include arginine 101, histidine 129, and glutamine 132. Arginine 162 and arginine 216 together coordinate L-aspartate. Carbamoyl phosphate is bound by residues glycine 257 and proline 258.

Belongs to the aspartate/ornithine carbamoyltransferase superfamily. ATCase family. In terms of assembly, heterododecamer (2C3:3R2) of six catalytic PyrB chains organized as two trimers (C3), and six regulatory PyrI chains organized as three dimers (R2).

The catalysed reaction is carbamoyl phosphate + L-aspartate = N-carbamoyl-L-aspartate + phosphate + H(+). It participates in pyrimidine metabolism; UMP biosynthesis via de novo pathway; (S)-dihydroorotate from bicarbonate: step 2/3. In terms of biological role, catalyzes the condensation of carbamoyl phosphate and aspartate to form carbamoyl aspartate and inorganic phosphate, the committed step in the de novo pyrimidine nucleotide biosynthesis pathway. The protein is Aspartate carbamoyltransferase catalytic subunit of Myxococcus xanthus (strain DK1622).